A 241-amino-acid chain; its full sequence is Uridylate kinase (241 aa).

Residue 15–18 (KLSG) participates in ATP binding. An involved in allosteric activation by GTP region spans residues 23-28 (GTEGFG). Position 57 (G57) interacts with UMP. Residues G58 and R62 each coordinate ATP. Residues D77 and 138-145 (TGNPFFTT) contribute to the UMP site. T165, F171, and D174 together coordinate ATP.

This sequence belongs to the UMP kinase family. In terms of assembly, homohexamer.

It localises to the cytoplasm. It carries out the reaction UMP + ATP = UDP + ADP. It participates in pyrimidine metabolism; CTP biosynthesis via de novo pathway; UDP from UMP (UMPK route): step 1/1. Allosterically activated by GTP. Inhibited by UTP. Catalyzes the reversible phosphorylation of UMP to UDP. The sequence is that of Uridylate kinase from Shigella dysenteriae serotype 1 (strain Sd197).